Consider the following 100-residue polypeptide: Cell division protein FtsB (100 aa).

The Cytoplasmic segment spans residues 1 to 3 (MKW). The chain crosses the membrane as a helical span at residues 4–21 (LAIILVVALLALQYRLWM). The Periplasmic segment spans residues 22–100 (GEGSIASVVS…TDKDTKKNKK (79 aa)). Residues 26-73 (IASVVSLNREIAKQKEENARLRERNRLLAAEVDALKQGKDAIEERARN) adopt a coiled-coil conformation.

It belongs to the FtsB family. As to quaternary structure, part of a complex composed of FtsB, FtsL and FtsQ.

It localises to the cell inner membrane. Functionally, essential cell division protein. May link together the upstream cell division proteins, which are predominantly cytoplasmic, with the downstream cell division proteins, which are predominantly periplasmic. This is Cell division protein FtsB from Saccharophagus degradans (strain 2-40 / ATCC 43961 / DSM 17024).